Consider the following 341-residue polypeptide: L-threonine 3-dehydrogenase (341 aa).

Zn(2+) is bound at residue Cys-38. Residues Thr-40 and His-43 each act as charge relay system in the active site. Residues His-63, Glu-64, Cys-93, Cys-96, Cys-99, and Cys-107 each contribute to the Zn(2+) site. Residues Ile-175, Asp-195, Arg-200, 262–264 (LGI), and 286–287 (IY) each bind NAD(+).

The protein belongs to the zinc-containing alcohol dehydrogenase family. As to quaternary structure, homotetramer. It depends on Zn(2+) as a cofactor.

It is found in the cytoplasm. It carries out the reaction L-threonine + NAD(+) = (2S)-2-amino-3-oxobutanoate + NADH + H(+). The protein operates within amino-acid degradation; L-threonine degradation via oxydo-reductase pathway; glycine from L-threonine: step 1/2. Functionally, catalyzes the NAD(+)-dependent oxidation of L-threonine to 2-amino-3-ketobutyrate. This is L-threonine 3-dehydrogenase from Edwardsiella ictaluri (strain 93-146).